The following is a 712-amino-acid chain: Voltage-gated chloride channel TMC4 (712 aa).

Positions 1–39 (MEENPTLESEAWGSSRGWLAPREARGAPCSSPGPSLSSV) are disordered. The Extracellular segment spans residues 1–168 (MEENPTLESE…GTESYFSLLR (168 aa)). N107 carries N-linked (GlcNAc...) asparagine glycosylation. Residues 169-189 (FLLLLNVLASVLMACMTLLPT) form a helical membrane-spanning segment. Topologically, residues 190-249 (WLGGAPPGPPGPDISSPCGSYNPHSQGLVTFATQLFNLLSGEGYLEWSPLFYGFYPPRPR) are cytoplasmic. Residues 250 to 270 (LAVTYLCWAFAVGLICLLLIL) form a helical membrane-spanning segment. Topologically, residues 271–348 (HRSVSGLKQT…GQQARVWLVR (78 aa)) are extracellular. A helical transmembrane segment spans residues 349–369 (VLLNLLVVALLGAAFYGVYWA). Residues 370 to 394 (TGCTVELQEMPLVQELPLLKLGVNY) lie on the Cytoplasmic side of the membrane. The helical transmembrane segment at 395-415 (LPSIFIAGVNFVLPPVFKLIA) threads the bilayer. At 416-425 (PLEGYTRSRQ) the chain is on the extracellular side. A helical transmembrane segment spans residues 426 to 446 (IVFILLRTVFLRLASLVVLLF). Residues 447–483 (SLWNQITCGGDSEAEDCKTCGYNYKQLPCWETVLGQE) are Cytoplasmic-facing. The helical transmembrane segment at 484 to 504 (MYKLLLFDLLTVLAVALLIQF) threads the bilayer. The Extracellular portion of the chain corresponds to 505-542 (PRKLLCGLCPGALGRLAGTQEFQVPDEVLGLIYAQTVV). The helical transmembrane segment at 543-565 (WVGSFFCPLLPLLNTVKFLLLFY) threads the bilayer. The Cytoplasmic portion of the chain corresponds to 566–592 (LKKLTLFSTCSPAARTFRASAANFFFP). Residues 593-613 (LVLLLGLAISSVPLLYSIFLI) form a helical membrane-spanning segment. At 614–654 (PPSKLCGPFRGQSSIWAQIPESISSLPETTQNFLFFLGTQA) the chain is on the extracellular side. Residues 655-677 (FAVPLLLISSILMAYTVALANSY) form a helical membrane-spanning segment. Residues 678-712 (GRLISELKRQRQTEAQNKVFLARRAVALTSTKPAL) lie on the Cytoplasmic side of the membrane.

It belongs to the TMC family.

It localises to the membrane. The catalysed reaction is chloride(in) = chloride(out). Voltage-gated chloride channel involved in high-concentration salt taste sensation. Depolarization induced by high NaCl concentration may trigger the activation of TMC4-mediated chloride influx into taste bud cells, helping the return to resting potential. Also allows permeation of organic anions including gluconate, but their current amplitudes at positive potentials are less than that of chloride. Involved in pH and temperature-dependent modulation of salty taste. This Homo sapiens (Human) protein is Voltage-gated chloride channel TMC4.